The chain runs to 318 residues: L-lactate dehydrogenase (318 aa).

Residues Val18, Asp39, Lys44, Tyr69, and 83-84 (GA) each bind NAD(+). Substrate is bound by residues Gln86 and Arg92. Residues Ser105, 122 to 124 (VSN), and Ser147 contribute to the NAD(+) site. Position 124 to 127 (124 to 127 (NPVD)) interacts with substrate. 152-155 (DTSR) is a binding site for substrate. His179 acts as the Proton acceptor in catalysis. A Phosphotyrosine modification is found at Tyr225. Thr234 contributes to the substrate binding site.

The protein belongs to the LDH/MDH superfamily. LDH family. In terms of assembly, homotetramer.

It is found in the cytoplasm. The enzyme catalyses (S)-lactate + NAD(+) = pyruvate + NADH + H(+). Its pathway is fermentation; pyruvate fermentation to lactate; (S)-lactate from pyruvate: step 1/1. Catalyzes the conversion of lactate to pyruvate. This chain is L-lactate dehydrogenase, found in Clostridium botulinum (strain Langeland / NCTC 10281 / Type F).